Consider the following 224-residue polypeptide: MSSKSMVLGYWDIRGLAHAIRMLLEFTDTSYEEKRYICGEAPDYDRSQWLDVKFKLDLDFPNLPYLMDGKNKITQSNAILRYIARKHNMCGDTEEEKIRVDIMENQIMDFRMQLVRLCYNSNHENLKPQYLEQLPAQLKQFSLFLGKFTWFAGEKLTFVDFLTYDVLDQNRIFEPKCLDEFPNLKAFMCRFEALEKIAAFLQSDRFFKMPINNKMAKWGNKCLC.

Residues 4 to 91 form the GST N-terminal domain; sequence KSMVLGYWDI…YIARKHNMCG (88 aa). At serine 5 the chain carries Phosphoserine. Glutathione contacts are provided by residues 10–11, 49–53, 62–63, and 75–76; these read YW, WLDVK, NL, and QS. Positions 93–211 constitute a GST C-terminal domain; that stretch reads TEEEKIRVDI…QSDRFFKMPI (119 aa). Tyrosine 119 is a substrate binding site.

This sequence belongs to the GST superfamily. Mu family. Homodimer. Interacts with PFKM isoform 2 and isoform 3 (via N-terminal testis-specific region).

It localises to the cytoplasm. It carries out the reaction RX + glutathione = an S-substituted glutathione + a halide anion + H(+). In terms of biological role, conjugation of reduced glutathione to a wide number of exogenous and endogenous hydrophobic electrophiles. The sequence is that of Glutathione S-transferase Mu 5 (Gstm5) from Mus musculus (Mouse).